The chain runs to 175 residues: Putative transmembrane protein ORF175 (175 aa).

4 consecutive transmembrane segments (helical) span residues 14 to 34, 58 to 78, 101 to 121, and 142 to 162; these read LGIV…GSFM, VLSN…AIAF, IVVA…FALF, and ITPF…VLSI.

The protein localises to the host membrane. The polypeptide is Putative transmembrane protein ORF175 (Acidianus two-tailed virus (ATV)).